Here is a 320-residue protein sequence, read N- to C-terminus: Probable carboxylesterase M8 (320 aa).

Positions 52–54 match the Involved in the stabilization of the negatively charged intermediate by the formation of the oxyanion hole motif; that stretch reads HGG. Residues Ser-137 and His-296 contribute to the active site.

The protein belongs to the 'GDXG' lipolytic enzyme family.

It carries out the reaction a carboxylic ester + H2O = an alcohol + a carboxylate + H(+). Its pathway is secondary metabolite biosynthesis. Probable carboxylesterase; part of the gene cluster that mediates the biosynthesis of squalestatin S1 (SQS1, also known as zaragozic acid A), a heavily oxidized fungal polyketide that offers potent cholesterol lowering activity by targeting squalene synthase (SS). SQS1 is composed of a 2,8-dioxobicyclic[3.2.1]octane-3,4,5-tricarboxyclic acid core that is connected to two lipophilic polyketide arms. These initial steps feature the priming of an unusual benzoic acid starter unit onto the highly reducing polyketide synthase pks2, followed by oxaloacetate extension and product release to generate a tricarboxylic acid containing product. The phenylalanine ammonia lyase (PAL) M7 and the acyl-CoA ligase M9 are involved in transforming phenylalanine into benzoyl-CoA. The citrate synthase-like protein R3 is involved in connecting the C-alpha-carbons of the hexaketide chain and oxaloacetate to afford the tricarboxylic acid unit. The potential hydrolytic enzymes, M8 and M10, are in close proximity to pks2 and may participate in product release. On the other side, the tetraketide arm is synthesized by a the squalestatin tetraketide synthase pks1 and enzymatically esterified to the core in the last biosynthetic step, by the acetyltransferase M4. The biosynthesis of the tetraketide must involve 3 rounds of chain extension. After the first and second rounds methyl-transfer occurs, and in all rounds of extension the ketoreductase and dehydratase are active. The enoyl reductase and C-MeT of pks1 are not active in the final round of extension. The acetyltransferase M4 appears to have a broad substrate selectivity for its acyl CoA substrate, allowing the in vitro synthesis of novel squalestatins. The biosynthesis of SQS1 requires several oxidative steps likely performed by oxidoreductases M1, R1 and R2. Finally, in support of the identification of the cluster as being responsible for SQS1 production, the cluster contains a gene encoding a putative squalene synthase (SS) R6, suggesting a likely mechanism for self-resistance. The sequence is that of Probable carboxylesterase M8 from Phoma sp. (strain ATCC 20986 / MF5453).